The sequence spans 224 residues: UPF0758 protein BPUM_2444 (224 aa).

The region spanning 102 to 224 (VIRTPEDGAN…FVSLKEKGYL (123 aa)) is the MPN domain. Residues His173, His175, and Asp186 each coordinate Zn(2+). Positions 173-186 (HNHPSGDPTPSRED) match the JAMM motif motif.

The protein belongs to the UPF0758 family.

In Bacillus pumilus (strain SAFR-032), this protein is UPF0758 protein BPUM_2444.